Reading from the N-terminus, the 500-residue chain is Protein DETOXIFICATION 29 (500 aa).

A run of 12 helical transmembrane segments spans residues 67–87 (GAITQVFAGHISTIALAAVSV), 91–111 (VVAGFSFGIMLGMGSALETLC), 132–152 (VILNVTALILSLLYIFAAPIL), 161–181 (ISSAAGIFSIYMIPQIFAYAI), 197–217 (VMAVISAVALVIHVPLTWFVI), 227–247 (LAVVLNASWCFIDMAQLVYIF), 277–297 (AVMLCLEVWYFMAIILFAGYL), 302–322 (ISVAALSICMNILGWTAMIAI), 349–369 (LVAVITSTLIGFIVSMILLIF), 393–413 (ILALSIVINNVQPVLSGVAVG), 419–439 (VVAYVNIACYYVFGIPFGLLL), and 449–469 (GIWCGMLTGTVVQTIVLTWMI).

The protein belongs to the multi antimicrobial extrusion (MATE) (TC 2.A.66.1) family.

The protein resides in the vacuole membrane. The chain is Protein DETOXIFICATION 29 from Arabidopsis thaliana (Mouse-ear cress).